A 168-amino-acid polypeptide reads, in one-letter code: 2-C-methyl-D-erythritol 2,4-cyclodiphosphate synthase (168 aa).

Residues aspartate 13 and histidine 15 each coordinate a divalent metal cation. Residues 13–15 (DVH) and 39–40 (HS) contribute to the 4-CDP-2-C-methyl-D-erythritol 2-phosphate site. Histidine 47 lines the a divalent metal cation pocket. Residues 61–63 (DIG), 66–70 (FPDTD), phenylalanine 144, and arginine 147 each bind 4-CDP-2-C-methyl-D-erythritol 2-phosphate.

This sequence belongs to the IspF family. Homotrimer. It depends on a divalent metal cation as a cofactor.

The catalysed reaction is 4-CDP-2-C-methyl-D-erythritol 2-phosphate = 2-C-methyl-D-erythritol 2,4-cyclic diphosphate + CMP. It participates in isoprenoid biosynthesis; isopentenyl diphosphate biosynthesis via DXP pathway; isopentenyl diphosphate from 1-deoxy-D-xylulose 5-phosphate: step 4/6. In terms of biological role, involved in the biosynthesis of isopentenyl diphosphate (IPP) and dimethylallyl diphosphate (DMAPP), two major building blocks of isoprenoid compounds. Catalyzes the conversion of 4-diphosphocytidyl-2-C-methyl-D-erythritol 2-phosphate (CDP-ME2P) to 2-C-methyl-D-erythritol 2,4-cyclodiphosphate (ME-CPP) with a corresponding release of cytidine 5-monophosphate (CMP). The chain is 2-C-methyl-D-erythritol 2,4-cyclodiphosphate synthase from Ralstonia nicotianae (strain ATCC BAA-1114 / GMI1000) (Ralstonia solanacearum).